A 269-amino-acid polypeptide reads, in one-letter code: Alcohol dehydrogenase-related 31 kDa protein (269 aa).

11–34 provides a ligand contact to NAD(+); it reads YVADCGGIALETCKVLMTKNIAKL. S139 serves as a coordination point for substrate. Residue Y152 is the Proton acceptor of the active site.

This sequence belongs to the short-chain dehydrogenases/reductases (SDR) family.

The chain is Alcohol dehydrogenase-related 31 kDa protein (Adhr) from Drosophila lebanonensis (Fruit fly).